A 195-amino-acid chain; its full sequence is MSSKEQKTPDEQVLDQKEAAKGQQADAAPETADVADPRDARIAELEAQLSELQQRERDNMLRVRAEADNVRRRAEMDVEKAHKFAVEKFASEMLPVIDNLERALDTADKANESLAAMIEGVELTLKSLLDAVRKFGIEVVGDVNVPFNPEVHQAMTMLPSADHQPNHVMMVMQKGYTLNGRLLRPAMVAVSKAQD.

A compositionally biased stretch (basic and acidic residues) spans 1–20 (MSSKEQKTPDEQVLDQKEAA). Residues 1–40 (MSSKEQKTPDEQVLDQKEAAKGQQADAAPETADVADPRDA) are disordered.

It belongs to the GrpE family. Homodimer.

Its subcellular location is the cytoplasm. In terms of biological role, participates actively in the response to hyperosmotic and heat shock by preventing the aggregation of stress-denatured proteins, in association with DnaK and GrpE. It is the nucleotide exchange factor for DnaK and may function as a thermosensor. Unfolded proteins bind initially to DnaJ; upon interaction with the DnaJ-bound protein, DnaK hydrolyzes its bound ATP, resulting in the formation of a stable complex. GrpE releases ADP from DnaK; ATP binding to DnaK triggers the release of the substrate protein, thus completing the reaction cycle. Several rounds of ATP-dependent interactions between DnaJ, DnaK and GrpE are required for fully efficient folding. The chain is Protein GrpE from Pectobacterium carotovorum subsp. carotovorum (strain PC1).